The primary structure comprises 119 residues: uncharacterized protein (119 aa).

It to T.pallidum TP_0127, TP_0315 and TP_0619.

This is an uncharacterized protein from Treponema pallidum (strain Nichols).